The following is a 701-amino-acid chain: Polyribonucleotide nucleotidyltransferase (701 aa).

Residues Asp487 and Asp493 each coordinate Mg(2+). A KH domain is found at 554–613; sequence PTMIAMKIDTDKIRDVIGKGGATIRAICEETKASIDIEDDGSIKIFGETKEAAEAARQRV. The S1 motif domain occupies 623–691; the sequence is GKIYVGKVER…NRGRIKLSIK (69 aa).

It belongs to the polyribonucleotide nucleotidyltransferase family. In terms of assembly, component of the RNA degradosome, which is a multiprotein complex involved in RNA processing and mRNA degradation. Requires Mg(2+) as cofactor.

Its subcellular location is the cytoplasm. The enzyme catalyses RNA(n+1) + phosphate = RNA(n) + a ribonucleoside 5'-diphosphate. Involved in mRNA degradation. Catalyzes the phosphorolysis of single-stranded polyribonucleotides processively in the 3'- to 5'-direction. The sequence is that of Polyribonucleotide nucleotidyltransferase from Pseudomonas putida (strain W619).